Here is a 207-residue protein sequence, read N- to C-terminus: 8-oxoguanine DNA glycosylase/AP lyase (207 aa).

Active-site residues include Lys129 and Asp147.

The protein belongs to the type-2 OGG1 family.

The enzyme catalyses 2'-deoxyribonucleotide-(2'-deoxyribose 5'-phosphate)-2'-deoxyribonucleotide-DNA = a 3'-end 2'-deoxyribonucleotide-(2,3-dehydro-2,3-deoxyribose 5'-phosphate)-DNA + a 5'-end 5'-phospho-2'-deoxyribonucleoside-DNA + H(+). Functionally, catalyzes the excision of an oxidatively damaged form of guanine (7,8-dihydro-8-oxoguanine = 8-oxoG) from DNA. Also cleaves the DNA backbone at apurinic/apyrimidinic sites (AP sites). Has little specificity for the base opposite oxoG. This chain is 8-oxoguanine DNA glycosylase/AP lyase, found in Methanocaldococcus jannaschii (strain ATCC 43067 / DSM 2661 / JAL-1 / JCM 10045 / NBRC 100440) (Methanococcus jannaschii).